The primary structure comprises 397 residues: CCA-adding enzyme (397 aa).

Glycine 26 and arginine 29 together coordinate ATP. Residues glycine 26 and arginine 29 each coordinate CTP. Mg(2+)-binding residues include aspartate 39 and aspartate 41. 5 residues coordinate ATP: arginine 110, aspartate 153, arginine 156, arginine 159, and arginine 162. Arginine 110, aspartate 153, arginine 156, arginine 159, and arginine 162 together coordinate CTP.

Belongs to the tRNA nucleotidyltransferase/poly(A) polymerase family. Bacterial CCA-adding enzyme type 3 subfamily. In terms of assembly, homodimer. It depends on Mg(2+) as a cofactor.

The enzyme catalyses a tRNA precursor + 2 CTP + ATP = a tRNA with a 3' CCA end + 3 diphosphate. The catalysed reaction is a tRNA with a 3' CCA end + 2 CTP + ATP = a tRNA with a 3' CCACCA end + 3 diphosphate. Its function is as follows. Catalyzes the addition and repair of the essential 3'-terminal CCA sequence in tRNAs without using a nucleic acid template. Adds these three nucleotides in the order of C, C, and A to the tRNA nucleotide-73, using CTP and ATP as substrates and producing inorganic pyrophosphate. tRNA 3'-terminal CCA addition is required both for tRNA processing and repair. Also involved in tRNA surveillance by mediating tandem CCA addition to generate a CCACCA at the 3' terminus of unstable tRNAs. While stable tRNAs receive only 3'-terminal CCA, unstable tRNAs are marked with CCACCA and rapidly degraded. The polypeptide is CCA-adding enzyme (Bacillus cytotoxicus (strain DSM 22905 / CIP 110041 / 391-98 / NVH 391-98)).